A 95-amino-acid polypeptide reads, in one-letter code: Protein TusB (95 aa).

Belongs to the DsrH/TusB family. In terms of assembly, heterohexamer, formed by a dimer of trimers. The hexameric TusBCD complex contains 2 copies each of TusB, TusC and TusD. The TusBCD complex interacts with TusE.

Its subcellular location is the cytoplasm. Part of a sulfur-relay system required for 2-thiolation of 5-methylaminomethyl-2-thiouridine (mnm(5)s(2)U) at tRNA wobble positions. This is Protein TusB from Escherichia coli O45:K1 (strain S88 / ExPEC).